The chain runs to 534 residues: C-type lectin domain family 18 member A (534 aa).

The disordered stretch occupies residues 47-88; the sequence is GALPVAGKPEPMARSLASAPVSPWHHMDRGSTTPAKARSHSA. Positions 139 to 270 constitute an SCP domain; sequence LTAHNRLRSR…EAMEAFVCAY (132 aa). Residues 316 to 349 form the EGF-like domain; the sequence is PRNPCRMSCRNLGHLNISTCRCHCQPGYTGRYCQ. 4 disulfides stabilise this stretch: Cys-324-Cys-337, Cys-339-Cys-348, Cys-415-Cys-520, and Cys-496-Cys-512. A C-type lectin domain is found at 394-521; the sequence is IDGDCFMVSP…CKTRNRYICQ (128 aa).

It is found in the secreted. This chain is C-type lectin domain family 18 member A (Clec18a), found in Mus musculus (Mouse).